A 298-amino-acid polypeptide reads, in one-letter code: Aspartate carbamoyltransferase catalytic subunit (298 aa).

2 residues coordinate carbamoyl phosphate: Arg-50 and Thr-51. Lys-79 lines the L-aspartate pocket. 3 residues coordinate carbamoyl phosphate: Arg-100, His-128, and Gln-131. L-aspartate is bound by residues Arg-160 and Arg-221. Leu-260 and Pro-261 together coordinate carbamoyl phosphate.

Belongs to the aspartate/ornithine carbamoyltransferase superfamily. ATCase family. In terms of assembly, heterooligomer of catalytic and regulatory chains.

It carries out the reaction carbamoyl phosphate + L-aspartate = N-carbamoyl-L-aspartate + phosphate + H(+). It functions in the pathway pyrimidine metabolism; UMP biosynthesis via de novo pathway; (S)-dihydroorotate from bicarbonate: step 2/3. Catalyzes the condensation of carbamoyl phosphate and aspartate to form carbamoyl aspartate and inorganic phosphate, the committed step in the de novo pyrimidine nucleotide biosynthesis pathway. The polypeptide is Aspartate carbamoyltransferase catalytic subunit (Methanoculleus marisnigri (strain ATCC 35101 / DSM 1498 / JR1)).